Consider the following 1097-residue polypeptide: MSFNFKWPTFSDEFHTSAAQMLNSALNRGPKPKVIADDILVEELGMGTIPPELEILEIGDLGTDRFRGIFRLTYAGDAHLVLKTKVQANPLSKPNRPDIGLFPSSNASRGILFAAAPLIVPMHLRLSSVKLRAIVVLVVSKAKGITLVFKNDPLESVEVSSTFDSVAVIQKYLQQEIEGQLREMFREDLPGIIHRLSQKWLSGEAKSEKDKVKQKAEAEEPPARSREPTLTRSTSEPLVALETASAPGGTPRKSHSKAKKHSRSGASVADFAASPCQSPQRPRQSPRRPRHVAKAASTSAVPLHSEFSATHASPFDAAFPDIENYDPTYGLRPDDLPTHSGFSGLGRLAQRGLGGLKDLTASPVFDLDTALGAADVDLDGAAVFEDLNRQSDDEGSEAEQSQDAHSSSHDGKHDEGDATTDSDLDAVLHDVGDDVSDLDVQERDNLVDTSIDYSRFGYPPASAAFSDAHELTRASSIIFDDQPQLTRKHSKRGSVSGRSSTRARRPSSSRSDRSACTSSLRKREEAEVVYETIPAVGGGIVTRPRVYHIASKVQPPEVDWDDEDTARPSQYGGTPSTRTGTTRFGSDYGSATMGAQSSRTNTVRGIHDLPHLNSAFVSRDGSEESLIDLPPESYHSSDASLPHALDAERSSVSGSDSRRGLTNPTSRESSYRDLSSQDLHWDHSASSTAPSSSQSLHWDMHSRNDAAARTVNVKAGQNAESNSGLSFRKNKSANHQRSITLGGGGGGGFPLRRPGEGPGMSATPARTRASAAASARSRPGFITYATSPPGDSSGWQRSPPLRASSDRDVAFSTSPGVAQDMLSISPFRDSSLHHGSPRETSNVAGAYASASNSPYTSGHNKGTQGAGAAPTHLSIDASAHFLDLVKSNHTLSPFTRSMEHFTVRSAPVTPGWQTASGNVSVVGSSAASGTGTTSGSSQTGANAKSGKAGSDKTRSQDHLSVGHTVAEPKTHCQADSAAPSSGLPARRRRTFQLGGSSSRDDTASNKPNNTSTGQGEDSQDNSAAPGSDDYGFARYAGSGPQPFRASGSSASSAITDSSSKGNRLGSKDLRRRSRPGSMGPPSEAARLSALRWEAIRE.

In terms of domain architecture, SMP-LTD spans Met-1–Gln-198. 8 disordered regions span residues Glu-204–Ser-305, Ala-317–Ser-343, Gln-390–Val-427, Asp-480–Leu-520, Pro-556–Thr-600, Leu-645–Ser-675, Gly-716–Val-817, and Gly-923–Glu-1097. The span at Ala-205–Thr-229 shows a compositional bias: basic and acidic residues. Basic residues predominate over residues Arg-252–Arg-263. Positions Ser-274–Arg-283 are enriched in low complexity. Over residues Gln-284–Ala-293 the composition is skewed to basic residues. The span at Ser-406–Gly-416 shows a compositional bias: basic and acidic residues. 2 stretches are compositionally biased toward low complexity: residues Ser-508–Ser-519 and Gly-572–Ser-586. The span at Thr-662–Ser-675 shows a compositional bias: polar residues. The segment covering Gly-759–Pro-779 has biased composition (low complexity). Over residues Tyr-784–Gln-796 the composition is skewed to polar residues. Low complexity predominate over residues Gly-923 to Ala-943. Positions Ser-1004–Ala-1024 are enriched in polar residues. Over residues Ala-1045–Ser-1059 the composition is skewed to low complexity.

The protein belongs to the MDM34 family. As to quaternary structure, component of the ER-mitochondria encounter structure (ERMES) or MDM complex, composed of MMM1, MDM10, MDM12 and MDM34.

The protein resides in the mitochondrion outer membrane. In terms of biological role, component of the ERMES/MDM complex, which serves as a molecular tether to connect the endoplasmic reticulum (ER) and mitochondria. Components of this complex are involved in the control of mitochondrial shape and protein biogenesis, and function in nonvesicular lipid trafficking between the ER and mitochondria. MDM34 is required for the interaction of the ER-resident membrane protein MMM1 and the outer mitochondrial membrane-resident beta-barrel protein MDM10. This chain is Mitochondrial distribution and morphology protein 34, found in Mycosarcoma maydis (Corn smut fungus).